The following is a 615-amino-acid chain: 1-deoxy-D-xylulose-5-phosphate synthase (615 aa).

Thiamine diphosphate is bound by residues His-72 and 111-113 (GHS). Asp-142 is a Mg(2+) binding site. Residues 143–144 (GA), Asn-171, Tyr-278, and Glu-360 contribute to the thiamine diphosphate site. Mg(2+) is bound at residue Asn-171.

This sequence belongs to the transketolase family. DXPS subfamily. Homodimer. Mg(2+) is required as a cofactor. The cofactor is thiamine diphosphate.

The catalysed reaction is D-glyceraldehyde 3-phosphate + pyruvate + H(+) = 1-deoxy-D-xylulose 5-phosphate + CO2. Its pathway is metabolic intermediate biosynthesis; 1-deoxy-D-xylulose 5-phosphate biosynthesis; 1-deoxy-D-xylulose 5-phosphate from D-glyceraldehyde 3-phosphate and pyruvate: step 1/1. Its function is as follows. Catalyzes the acyloin condensation reaction between C atoms 2 and 3 of pyruvate and glyceraldehyde 3-phosphate to yield 1-deoxy-D-xylulose-5-phosphate (DXP). The protein is 1-deoxy-D-xylulose-5-phosphate synthase of Campylobacter jejuni subsp. jejuni serotype O:6 (strain 81116 / NCTC 11828).